The following is a 313-amino-acid chain: MKKKLLAGAITLLSVATLAACSKGSEGADLISMKGDIITEHQFYEQVKNNPSAQQVLLNMTIQKVFEKQYGSELDDKEVDDTIAEEKKQYGENYQRVLSQAGMTLETRKAQIRTSKLVELAVKKVAEAELTDEAYKKAFDEYTPDVTAQIIRLNNEDKAKEVLEKAKAEGADFAQLAKDNSTDEKTKENGGEITFDSASTEVPEQVKKAAFALDVDGVSDVITATGTQAYSSQYYIVKLTKKTEKSSNIDDYKEKLKTVILTQKQNDSTFVQSIIGKELQAANIKVKDQAFQNIFTQYIGGGDSSSSSSTSNE.

Residues 1 to 20 form the signal peptide; that stretch reads MKKKLLAGAITLLSVATLAA. Residue Cys21 is the site of N-palmitoyl cysteine attachment. Cys21 is lipidated: S-diacylglycerol cysteine. The PpiC domain occupies 143–241; it reads TPDVTAQIIR…SQYYIVKLTK (99 aa).

This sequence belongs to the PrsA family.

Its subcellular location is the cell membrane. It catalyses the reaction [protein]-peptidylproline (omega=180) = [protein]-peptidylproline (omega=0). Functionally, plays a major role in protein secretion by helping the post-translocational extracellular folding of several secreted proteins. The sequence is that of Foldase protein PrsA from Streptococcus pneumoniae (strain P1031).